The chain runs to 143 residues: Hemoglobin subunit alpha-1 (143 aa).

N-acetylserine is present on Ser2. Positions 2–143 (SLTEKDKAAV…VSLALAERYR (142 aa)) constitute a Globin domain. Residue His60 coordinates O2. His89 contacts heme b.

This sequence belongs to the globin family. Hb 1 is a heterotetramer of two alpha-1 and two beta chains. Red blood cells.

Involved in oxygen transport from gills to the various peripheral tissues. In Cottoperca gobio (Frogmouth), this protein is Hemoglobin subunit alpha-1 (hba1).